We begin with the raw amino-acid sequence, 509 residues long: Pyruvate kinase (509 aa).

At serine 29 the chain carries Phosphoserine. Position 56 (arginine 56) interacts with substrate. Residues asparagine 58 and serine 60 each contribute to the K(+) site. 58-61 provides a ligand contact to ATP; it reads NFSH. Serine 63 carries the phosphoserine modification. Residues aspartate 91 and threonine 92 each contribute to the K(+) site. ATP contacts are provided by arginine 98 and lysine 184. Glutamate 249 contributes to the Mg(2+) binding site. Positions 272 and 273 each coordinate substrate. Residue aspartate 273 coordinates Mg(2+). Residue serine 281 is modified to Phosphoserine. A substrate-binding site is contributed by threonine 305. Serine 412 carries the post-translational modification Phosphoserine.

Belongs to the pyruvate kinase family. As to quaternary structure, homotetramer. The cofactor is Mg(2+). K(+) serves as cofactor.

The catalysed reaction is pyruvate + ATP = phosphoenolpyruvate + ADP + H(+). The protein operates within carbohydrate degradation; glycolysis; pyruvate from D-glyceraldehyde 3-phosphate: step 5/5. The polypeptide is Pyruvate kinase (pyk1) (Schizosaccharomyces pombe (strain 972 / ATCC 24843) (Fission yeast)).